The following is a 123-amino-acid chain: Ig heavy chain V region HPCG13 (123 aa).

Residues 1–114 (EVKLVESGGG…GSYWYFDVWG (114 aa)) form the Ig-like domain.

This is Ig heavy chain V region HPCG13 from Mus musculus (Mouse).